The following is a 489-amino-acid chain: uncharacterized protein (489 aa).

Transmembrane regions (helical) follow at residues M1–R21, F40–L60, F74–V94, P117–L137, A158–G178, I188–G208, A234–F254, I271–I291, F318–L338, V362–F382, I388–F408, F422–I442, and L456–M476.

It belongs to the sodium:solute symporter (SSF) (TC 2.A.21) family.

It localises to the cell membrane. This is an uncharacterized protein from Bacillus subtilis (strain 168).